Here is a 99-residue protein sequence, read N- to C-terminus: UPF0125 protein BU253 (99 aa).

The protein belongs to the UPF0125 (RnfH) family.

The sequence is that of UPF0125 protein BU253 from Buchnera aphidicola subsp. Acyrthosiphon pisum (strain APS) (Acyrthosiphon pisum symbiotic bacterium).